The chain runs to 289 residues: Acetylglutamate kinase (289 aa).

Residues 65–66 (GG), R87, and N187 each bind substrate.

The protein belongs to the acetylglutamate kinase family. ArgB subfamily.

The protein localises to the cytoplasm. It carries out the reaction N-acetyl-L-glutamate + ATP = N-acetyl-L-glutamyl 5-phosphate + ADP. Its pathway is amino-acid biosynthesis; L-arginine biosynthesis; N(2)-acetyl-L-ornithine from L-glutamate: step 2/4. Functionally, catalyzes the ATP-dependent phosphorylation of N-acetyl-L-glutamate. In Chromobacterium violaceum (strain ATCC 12472 / DSM 30191 / JCM 1249 / CCUG 213 / NBRC 12614 / NCIMB 9131 / NCTC 9757 / MK), this protein is Acetylglutamate kinase.